The chain runs to 20 residues: Ribulose bisphosphate carboxylase small subunit (20 aa).

It belongs to the RuBisCO small chain family. Heterohexadecamer of 8 large and 8 small subunits.

It is found in the plastid. It localises to the chloroplast. Its function is as follows. RuBisCO catalyzes two reactions: the carboxylation of D-ribulose 1,5-bisphosphate, the primary event in carbon dioxide fixation, as well as the oxidative fragmentation of the pentose substrate in the photorespiration process. Both reactions occur simultaneously and in competition at the same active site. Although the small subunit is not catalytic it is essential for maximal activity. This Chattonella marina var. antiqua (Red tide flagellate) protein is Ribulose bisphosphate carboxylase small subunit.